Here is a 1119-residue protein sequence, read N- to C-terminus: MDPCGNPAVPGGDCPQTRGPGLQGSSGQEGPLQGICVDSSHSEHEDRNRMSEELIMVVQEMKKYFPAERHTKPSTLDALNYALRCVHSVQANSEFFQSLSPRGARQAEATVYNLEELTSLASEHTSKNTDTFVAVFSFLSGRLVHISEQAAWILNSKKGFLKSLHFVDLLAPRDVRVFYAHTAPTQLPFWNTWTQRASQYECAPVKPFFCRICGGGDREQKRHYSPFRILPYLVHVHSPAQPEPEPCCLTLVEKIHSGYEAPRIPVDKRVFTTTHTPGCVFLEVDERAVPLLGFLPQDLIGTSILTYLHPEDRPLMVAVHQKVLKYVGHPPFEHSPIRFCTQNGDYVILDSSWSSFVNPWSRKVSFIIGRHKVRTSPLNEDVFATRIKKATSHDEDITELQEQIHRLLLQPVHASASSGYGSLGSSGSQEQHISVTSSSESSGHCVEEAQQEQMTLQQVYASVNKIKNVGQQLYIESMARSSVKPVMETCTEPQGSDEQKDFSSSQTLKNKSTDTGSGGDLRPEQHSSSYQQMNCIDSVIRYLTSYSFPALKRKCISCTNTSSSSEEAKPNPEADGSLRDTEQLLDIPEQETTTPSADAEGGVARTLSTAALSMASGVSQCSCSSTTDHVPPLQSESVAGACEPWALRTKAHVTAEGFKPVGLTAAVLSAHTQKEEQNYVDRFREKILTSPYGCYLQQEGRNHAKYACVVGAGATPKHSRCAGSERRKHKRKKLPTPVDSSSSSAHLCPHVRGLLPDVQHWSASVTSPCATGLALPSALVVPNQTPYLLSSFPLQDMAPHGVGDSAPWGAAAECPPLSAGPHPVSTFPSAYMGTFMTVLLHNSPLFPLWPASFSPYPFLGATGPSQMAPLVPAMAPDLEPTPSDHGPRRVEENWETHSEEEHPFISSRSSSPLQLNLLQEEMPAPSEYADALRRGACPDAKQLCVTGNSGSRSPPCATGELATASVQQESPSAAASGSSASSVHGSGSDYTSEVSENGQRSQDTHRDRAFSGAAEESIWRMIERTPQCVLMTYQVPERGRDTVLREDLEKLHSMERQRPQFSSAQKEELAKVRSWIHSHPAPEERQLQRAMSPVKTEVQLVTLQRPVNSVQQKTPVEQL.

Positions 1 to 48 are disordered; sequence MDPCGNPAVPGGDCPQTRGPGLQGSSGQEGPLQGICVDSSHSEHEDRN. The short motif at 54–63 is the Nuclear export signal 1 element; sequence LIMVVQEMKK. PAS domains lie at 120–187 and 259–325; these read LASE…PTQL and YEAP…KVLK. The 44-residue stretch at 334–377 folds into the PAC domain; that stretch reads HSPIRFCTQNGDYVILDSSWSSFVNPWSRKVSFIIGRHKVRTSP. Positions 400–409 match the Nuclear export signal 3 motif; it reads LQEQIHRLLL. Low complexity predominate over residues 419–428; sequence GYGSLGSSGS. Disordered stretches follow at residues 419 to 449, 483 to 530, 718 to 744, and 878 to 910; these read GYGSLGSSGSQEQHISVTSSSESSGHCVEEA, VKPV…SSSY, HSRCAGSERRKHKRKKLPTPVDSSSSS, and LEPTPSDHGPRRVEENWETHSEEEHPFISSRSS. 2 stretches are compositionally biased toward polar residues: residues 429 to 442 and 491 to 515; these read QEQHISVTSSSESS and TEPQGSDEQKDFSSSQTLKNKSTDT. The segment at 551–750 is CSNK1E binding domain; it reads LKRKCISCTN…SSSSAHLCPH (200 aa). The Nuclear localization signal motif lies at 720–739; it reads RCAGSERRKHKRKKLPTPVD. The span at 885–903 shows a compositional bias: basic and acidic residues; the sequence is HGPRRVEENWETHSEEEHP. S907 is subject to Phosphoserine. The short motif at 913–920 is the Nuclear export signal 2 element; it reads LQLNLLQE. The tract at residues 947 to 1011 is disordered; that stretch reads GNSGSRSPPC…QDTHRDRAFS (65 aa). A compositionally biased stretch (low complexity) spans 970–988; that stretch reads SPSAAASGSSASSVHGSGS. Positions 989–1001 are enriched in polar residues; the sequence is DYTSEVSENGQRS. Positions 1037–1119 are CRY binding domain; it reads ERGRDTVLRE…VQQKTPVEQL (83 aa).

Homodimer. Component of the circadian core oscillator, which includes the CRY proteins, CLOCK or NPAS2, BMAL1 or BMAL2, CSNK1D and/or CSNK1E, TIMELESS and the PER proteins. Interacts directly with PER1, PER2, CRY1, CRY2, and TIMELESS; interaction with CRY1 and CRY2 is weak and not rhythmic. Interacts with FBXW11 and BTRC. In terms of processing, phosphorylation by CSNK1E is weak and appears to require association with PER1 and translocation to the nucleus. Post-translationally, ubiquitinated.

Its subcellular location is the cytoplasm. It localises to the nucleus. In terms of biological role, originally described as a core component of the circadian clock. The circadian clock, an internal time-keeping system, regulates various physiological processes through the generation of approximately 24 hour circadian rhythms in gene expression, which are translated into rhythms in metabolism and behavior. It is derived from the Latin roots 'circa' (about) and 'diem' (day) and acts as an important regulator of a wide array of physiological functions including metabolism, sleep, body temperature, blood pressure, endocrine, immune, cardiovascular, and renal function. Consists of two major components: the central clock, residing in the suprachiasmatic nucleus (SCN) of the brain, and the peripheral clocks that are present in nearly every tissue and organ system. Both the central and peripheral clocks can be reset by environmental cues, also known as Zeitgebers (German for 'timegivers'). The predominant Zeitgeber for the central clock is light, which is sensed by retina and signals directly to the SCN. The central clock entrains the peripheral clocks through neuronal and hormonal signals, body temperature and feeding-related cues, aligning all clocks with the external light/dark cycle. Circadian rhythms allow an organism to achieve temporal homeostasis with its environment at the molecular level by regulating gene expression to create a peak of protein expression once every 24 hours to control when a particular physiological process is most active with respect to the solar day. Transcription and translation of core clock components (CLOCK, NPAS2, BMAL1, BMAL2, PER1, PER2, PER3, CRY1 and CRY2) plays a critical role in rhythm generation, whereas delays imposed by post-translational modifications (PTMs) are important for determining the period (tau) of the rhythms (tau refers to the period of a rhythm and is the length, in time, of one complete cycle). A diurnal rhythm is synchronized with the day/night cycle, while the ultradian and infradian rhythms have a period shorter and longer than 24 hours, respectively. Disruptions in the circadian rhythms contribute to the pathology of cardiovascular diseases, cancer, metabolic syndromes and aging. A transcription/translation feedback loop (TTFL) forms the core of the molecular circadian clock mechanism. Transcription factors, CLOCK or NPAS2 and BMAL1 or BMAL2, form the positive limb of the feedback loop, act in the form of a heterodimer and activate the transcription of core clock genes and clock-controlled genes (involved in key metabolic processes), harboring E-box elements (5'-CACGTG-3') within their promoters. The core clock genes: PER1/2/3 and CRY1/2 which are transcriptional repressors form the negative limb of the feedback loop and interact with the CLOCK|NPAS2-BMAL1|BMAL2 heterodimer inhibiting its activity and thereby negatively regulating their own expression. This heterodimer also activates nuclear receptors NR1D1, NR1D2, RORA, RORB and RORG, which form a second feedback loop and which activate and repress BMAL1 transcription, respectively. Has a redundant role with the other PER proteins PER1 and PER2 and is not essential for the circadian rhythms maintenance. In contrast, plays an important role in sleep-wake timing and sleep homeostasis probably through the transcriptional regulation of sleep homeostasis-related genes, without influencing circadian parameters. Can bind heme. This chain is Period circadian protein homolog 3 (Per3), found in Rattus norvegicus (Rat).